Here is a 65-residue protein sequence, read N- to C-terminus: Large ribosomal subunit protein bL35 (65 aa).

The protein belongs to the bacterial ribosomal protein bL35 family.

The polypeptide is Large ribosomal subunit protein bL35 (Yersinia pseudotuberculosis serotype O:1b (strain IP 31758)).